The primary structure comprises 355 residues: Transcription factor TCP13 (355 aa).

Positions 1 to 57 (MNIVSWKDANDEVAGGATTRREREVKEDQEETEVRATSGKTVIKKQPTSISSSSSSW) are disordered. One can recognise a TCP domain in the interval 74-132 (GKDRHSKVCTLRGLRDRRVRLSVPTAIQLYDLQERLGVDQPSKAVDWLLDAAKEEIDEL). The segment at 329–355 (TNSTTTANMSRHLGSERCTSRGSDHHM) is disordered. Residues 341-355 (LGSERCTSRGSDHHM) show a composition bias toward basic and acidic residues.

As to quaternary structure, interacts with AHL27 and AHL29. Interacts with SPL. Interacts with KIN10; KIN11 and FLZ3. As to expression, expressed in cotyledons, particularly in the vascular region, in leaves, buds, flowers and immature siliques, and, to a lower extent, in roots.

The protein resides in the nucleus. The protein localises to the plastid. It localises to the chloroplast. Functionally, plays a pivotal role in the control of morphogenesis of shoot organs by negatively regulating the expression of boundary-specific genes such as CUC genes, probably through the induction of miRNA (e.g. miR164). Binds to the 3'-ACC-5' repeats in the light-responsive promoter (LRP) of psbD, and activates its transcription. Participates in ovule development. The polypeptide is Transcription factor TCP13 (TCP13) (Arabidopsis thaliana (Mouse-ear cress)).